The primary structure comprises 64 residues: Movement protein TGBp3 (64 aa).

Topologically, residues 1–4 are lumenal; the sequence is MRSV. The chain crosses the membrane as a helical span at residues 5 to 27; sequence ALTLCAIIAGYLLVSNLQNVFSP. Residues 28-64 lie on the Cytoplasmic side of the membrane; it reads EVCTLVITGESIRINGCNLSPAHFRAISHLKVLQIHL.

Belongs to the Tymovirales TGBp3 protein family.

Its subcellular location is the host endoplasmic reticulum membrane. Plays a role in viral cell-to-cell propagation, by facilitating genome transport to neighboring plant cells through plasmosdesmata. May induce the formation of granular vesicles derived from the Endoplasmic reticulum, which align on actin filaments. The chain is Movement protein TGBp3 from Lily symptomless virus (LSV).